Consider the following 1073-residue polypeptide: Lon protease homolog, mitochondrial (1073 aa).

A mitochondrion-targeting transit peptide spans 1-27 (MIKASKCNKARALFLVRTSIPRTFIRN). Composition is skewed to basic and acidic residues over residues 69–107 (FDSKKEKQPSTDKSNDKDKPSRKEKGKDKEKENEERKDI) and 113–123 (YDIKEETDSKP). The interval 69–173 (FDSKKEKQPS…DKEFLSPSDA (105 aa)) is disordered. Residues 132 to 150 (SSKSSISSSSGGANNNNNN) show a composition bias toward low complexity. Basic and acidic residues predominate over residues 158 to 167 (DDGSPKDKEF). A Lon N-terminal domain is found at 177 to 395 (PPFLAIAMKD…LSLQLLQVEA (219 aa)). ATP is bound at residue 543-550 (GPPGTGKT). A compositionally biased stretch (basic and acidic residues) spans 775–785 (SVISDKAKKDA). The tract at residues 775-821 (SVISDKAKKDAGSSSIESNDSNTEAKVSTTTENEKKQEQKQKQDEEI) is disordered. Residues 790-805 (IESNDSNTEAKVSTTT) are compositionally biased toward polar residues. Positions 806 to 821 (ENEKKQEQKQKQDEEI) are enriched in basic and acidic residues. The 189-residue stretch at 856-1044 (TLNPGVATGL…SEVFEHLFKG (189 aa)) folds into the Lon proteolytic domain. Active-site residues include serine 950 and lysine 993.

It belongs to the peptidase S16 family. Homohexamer or homoheptamer. Organized in a ring with a central cavity.

The protein resides in the mitochondrion matrix. The enzyme catalyses Hydrolysis of proteins in presence of ATP.. Its function is as follows. ATP-dependent serine protease that mediates the selective degradation of misfolded, unassembled or oxidatively damaged polypeptides as well as certain short-lived regulatory proteins in the mitochondrial matrix. May also have a chaperone function in the assembly of inner membrane protein complexes. Participates in the regulation of mitochondrial gene expression and in the maintenance of the integrity of the mitochondrial genome. Binds to mitochondrial DNA in a site-specific manner. The polypeptide is Lon protease homolog, mitochondrial (Candida dubliniensis (strain CD36 / ATCC MYA-646 / CBS 7987 / NCPF 3949 / NRRL Y-17841) (Yeast)).